A 160-amino-acid polypeptide reads, in one-letter code: Phosphopantetheine adenylyltransferase (160 aa).

Residue Ser8 coordinates substrate. Residues 8–9 and His16 contribute to the ATP site; that span reads SF. Positions 40, 72, and 86 each coordinate substrate. Residues 87–89, Glu97, and 122–128 contribute to the ATP site; these read GLR and YSFLSSS.

The protein belongs to the bacterial CoaD family. As to quaternary structure, homohexamer. Requires Mg(2+) as cofactor.

It localises to the cytoplasm. The catalysed reaction is (R)-4'-phosphopantetheine + ATP + H(+) = 3'-dephospho-CoA + diphosphate. Its pathway is cofactor biosynthesis; coenzyme A biosynthesis; CoA from (R)-pantothenate: step 4/5. Its function is as follows. Reversibly transfers an adenylyl group from ATP to 4'-phosphopantetheine, yielding dephospho-CoA (dPCoA) and pyrophosphate. The chain is Phosphopantetheine adenylyltransferase from Synechococcus sp. (strain CC9311).